A 173-amino-acid polypeptide reads, in one-letter code: Shikimate kinase 2 (173 aa).

ATP is bound at residue 12-17 (GCGKTT). Thr16 and Asp32 together coordinate Mg(2+). 3 residues coordinate substrate: Asp34, Arg58, and Gly79. Positions 112–126 (EENPQDNQRPTLTGR) are LID domain. Position 120 (Arg120) interacts with ATP. Arg139 is a substrate binding site. Residue Gln155 participates in ATP binding.

The protein belongs to the shikimate kinase family. AroL subfamily. Monomer. The cofactor is Mg(2+).

The protein resides in the cytoplasm. It catalyses the reaction shikimate + ATP = 3-phosphoshikimate + ADP + H(+). The protein operates within metabolic intermediate biosynthesis; chorismate biosynthesis; chorismate from D-erythrose 4-phosphate and phosphoenolpyruvate: step 5/7. Functionally, catalyzes the specific phosphorylation of the 3-hydroxyl group of shikimic acid using ATP as a cosubstrate. The polypeptide is Shikimate kinase 2 (Pectobacterium atrosepticum (strain SCRI 1043 / ATCC BAA-672) (Erwinia carotovora subsp. atroseptica)).